We begin with the raw amino-acid sequence, 476 residues long: Aspartate kinase Ask_Ect (476 aa).

Residues 405–476 (SAIGSDLKVK…ENHGDVIAAA (72 aa)) enclose the ACT domain.

The protein belongs to the aspartokinase family. Monomer.

It is found in the cytoplasm. It catalyses the reaction L-aspartate + ATP = 4-phospho-L-aspartate + ADP. The protein operates within amine and polyamine biosynthesis; ectoine biosynthesis. Its activity is regulated as follows. Allosterically and strongly feedback inhibited by tryptophan. The presence of either 650 mM NaCl or KCl reduces the inhibition by tryptophan. In terms of biological role, involved in the biosynthesis of L-aspartate-beta-semialdehyde, which is an intermediate in the biosynthesis of ectoine, a highly soluble organic osmolyte, called compatible solute. Ectoine is used to avoid excessive water efflux, plasmolysis, molecular crowding of the cytoplasm, and cessation of growth in high salinity environments. Catalyzes the phosphorylation of the beta-carboxyl group of L-aspartate to yield 4-phospho-L-aspartate. This Stutzerimonas stutzeri (strain A1501) (Pseudomonas stutzeri) protein is Aspartate kinase Ask_Ect (ask).